The primary structure comprises 81 residues: Omega-conotoxin-like TxO4 (81 aa).

The N-terminal stretch at 1 to 22 (MKLTCVVIVAVLFLTAWTFVTA) is a signal peptide. The propeptide occupies 23 to 52 (VPHSSNALENLYLKARHEMENPEASKLNTR). 3 disulfide bridges follow: cysteine 55–cysteine 72, cysteine 62–cysteine 76, and cysteine 71–cysteine 80. The residue at position 70 (proline 70) is a 4-hydroxyproline; partial. Position 75 is a 6'-bromotryptophan; partial (tryptophan 75).

Belongs to the conotoxin O1 superfamily. Post-translationally, txO4 is found with and without hydroxyproline and these two forms have a bromotryptophan. Truncated TxO4 is found with and without bromotryptophan, and these two forms have no hydroxyproline. Expressed by the venom duct.

Its subcellular location is the secreted. In terms of biological role, omega-conotoxins act at presynaptic membranes, they bind and block voltage-gated calcium channels (Cav). The sequence is that of Omega-conotoxin-like TxO4 from Conus textile (Cloth-of-gold cone).